The chain runs to 485 residues: Transcription factor ETV6 (485 aa).

Over residues 1-10 (MSETPAQSSI) the composition is skewed to polar residues. The segment at 1 to 32 (MSETPAQSSIKQERISYTPPESPVASHRSSTP) is disordered. Lysine 11 is subject to N6-acetyllysine; alternate. Lysine 11 is covalently cross-linked (Glycyl lysine isopeptide (Lys-Gly) (interchain with G-Cter in SUMO2); alternate). At threonine 18 the chain carries Phosphothreonine. Phosphoserine is present on serine 22. In terms of domain architecture, PNT spans 41–125 (ALRMEEDSIH…ELLQHILKQR (85 aa)). Residues 157–210 (NCVQRTPRTPAESVHHNPPTIELLHRPRSPITTNHRPSPDPEQQRPQRSPLDNM) are disordered. Threonine 165 bears the Phosphothreonine mark. Residues serine 215, serine 240, and serine 251 each carry the phosphoserine modification. Lysine 284 participates in a covalent cross-link: Glycyl lysine isopeptide (Lys-Gly) (interchain with G-Cter in SUMO2). The residue at position 298 (lysine 298) is an N6-acetyllysine; alternate. Lysine 298 participates in a covalent cross-link: Glycyl lysine isopeptide (Lys-Gly) (interchain with G-Cter in SUMO2); alternate. At serine 319 the chain carries Phosphoserine. A DNA-binding region (ETS) is located at residues 335–416 (RLLWDYVYQL…PGQRLLFRFM (82 aa)). Glycyl lysine isopeptide (Lys-Gly) (interchain with G-Cter in SUMO2) cross-links involve residues lysine 399 and lysine 417. Residues 440–485 (EQTYQEDEPTIASPVGWPRGNLPTGTAGGVMEAGELGVAVKEETRE) form a disordered region.

This sequence belongs to the ETS family. In terms of assembly, can form homodimers or heterodimers with TEL2 or FLI1. Interacts with L3MBTL1 and HDAC9.

Its subcellular location is the nucleus. Its function is as follows. Transcriptional repressor; binds to the DNA sequence 5'-CCGGAAGT-3'. Plays a role in hematopoiesis and malignant transformation. In Mus musculus (Mouse), this protein is Transcription factor ETV6 (Etv6).